The following is a 184-amino-acid chain: Coordinator of PRMT5 and differentiation stimulator (184 aa).

Met-1 bears the N-acetylmethionine mark. The segment covering 1–14 has biased composition (low complexity); sequence MDLQAAGAQAQGAA. The tract at residues 1–136 is disordered; that stretch reads MDLQAAGAQA…PYDADDIQES (136 aa). Positions 42-56 are enriched in basic and acidic residues; that stretch reads SSQERETEKAMDRLA. 2 positions are modified to phosphoserine: Ser-66 and Ser-75. The segment covering 78-89 has biased composition (acidic residues); the sequence is EGFAMDEEDSDG.

In terms of assembly, interacts with PRMT5. Interacts with histone H4; specifically interacts with the N-terminus of histone H4 but not with histone H3. Interacts with CBFB. Found in a complex with PRMT5, RUNX1 and CBFB.

It is found in the nucleus. Histone-binding protein required for histone H4 methyltransferase activity of PRMT5. Specifically required for histone H4 'Arg-3' methylation mediated by PRMT5, but not histone H3 'Arg-8' methylation, suggesting that it modulates the substrate specificity of PRMT5. Specifically interacts with the N-terminus of histone H4 but not with histone H3, suggesting that it acts by promoting the association between histone H4 and PRMT5. Involved in CCNE1 promoter repression. Plays a role in muscle cell differentiation by modulating the recruitment of PRMT5 to the promoter of genes involved in the coordination between cell cycle exit and muscle differentiation. This chain is Coordinator of PRMT5 and differentiation stimulator (COPRS), found in Homo sapiens (Human).